The sequence spans 100 residues: Aspartyl/glutamyl-tRNA(Asn/Gln) amidotransferase subunit C (100 aa).

Belongs to the GatC family. Heterotrimer of A, B and C subunits.

The catalysed reaction is L-glutamyl-tRNA(Gln) + L-glutamine + ATP + H2O = L-glutaminyl-tRNA(Gln) + L-glutamate + ADP + phosphate + H(+). It carries out the reaction L-aspartyl-tRNA(Asn) + L-glutamine + ATP + H2O = L-asparaginyl-tRNA(Asn) + L-glutamate + ADP + phosphate + 2 H(+). In terms of biological role, allows the formation of correctly charged Asn-tRNA(Asn) or Gln-tRNA(Gln) through the transamidation of misacylated Asp-tRNA(Asn) or Glu-tRNA(Gln) in organisms which lack either or both of asparaginyl-tRNA or glutaminyl-tRNA synthetases. The reaction takes place in the presence of glutamine and ATP through an activated phospho-Asp-tRNA(Asn) or phospho-Glu-tRNA(Gln). The chain is Aspartyl/glutamyl-tRNA(Asn/Gln) amidotransferase subunit C from Streptococcus pneumoniae (strain Hungary19A-6).